The following is a 341-amino-acid chain: tRNA N6-adenosine threonylcarbamoyltransferase (341 aa).

Fe cation contacts are provided by H111 and H115. Substrate is bound by residues 134–138 (LVSGG), D167, G180, and N276. A Fe cation-binding site is contributed by D304.

It belongs to the KAE1 / TsaD family. It depends on Fe(2+) as a cofactor.

It localises to the cytoplasm. The enzyme catalyses L-threonylcarbamoyladenylate + adenosine(37) in tRNA = N(6)-L-threonylcarbamoyladenosine(37) in tRNA + AMP + H(+). Required for the formation of a threonylcarbamoyl group on adenosine at position 37 (t(6)A37) in tRNAs that read codons beginning with adenine. Is involved in the transfer of the threonylcarbamoyl moiety of threonylcarbamoyl-AMP (TC-AMP) to the N6 group of A37, together with TsaE and TsaB. TsaD likely plays a direct catalytic role in this reaction. This is tRNA N6-adenosine threonylcarbamoyltransferase from Pseudomonas paraeruginosa (strain DSM 24068 / PA7) (Pseudomonas aeruginosa (strain PA7)).